A 271-amino-acid polypeptide reads, in one-letter code: Acetylglutamate kinase (271 aa).

Substrate contacts are provided by residues 41-42 (GG), arginine 63, and asparagine 166.

The protein belongs to the acetylglutamate kinase family. ArgB subfamily.

The protein localises to the cytoplasm. It catalyses the reaction N-acetyl-L-glutamate + ATP = N-acetyl-L-glutamyl 5-phosphate + ADP. It participates in amino-acid biosynthesis; L-arginine biosynthesis; N(2)-acetyl-L-ornithine from L-glutamate: step 2/4. Functionally, catalyzes the ATP-dependent phosphorylation of N-acetyl-L-glutamate. The chain is Acetylglutamate kinase from Anaeromyxobacter sp. (strain Fw109-5).